The primary structure comprises 427 residues: Serine/threonine-protein kinase ssn3 (427 aa).

The Protein kinase domain occupies 40–369; it reads YHIVGFISSG…AQEALEHPYF (330 aa). ATP is bound by residues 46–54 and Lys-70; that span reads ISSGTYGRV. Asp-172 acts as the Proton acceptor in catalysis. Over residues 390 to 399 the composition is skewed to basic and acidic residues; that stretch reads RRVTQDDNDI. Residues 390–427 form a disordered region; the sequence is RRVTQDDNDIRSGSLPGTKRSGLPDDSLLGRATKRLKE.

It belongs to the protein kinase superfamily. CMGC Ser/Thr protein kinase family. CDC2/CDKX subfamily. In terms of assembly, component of the srb8-11 complex, a regulatory module of the Mediator complex. Mg(2+) is required as a cofactor.

The protein resides in the nucleus. It catalyses the reaction L-seryl-[protein] + ATP = O-phospho-L-seryl-[protein] + ADP + H(+). The enzyme catalyses L-threonyl-[protein] + ATP = O-phospho-L-threonyl-[protein] + ADP + H(+). The catalysed reaction is [DNA-directed RNA polymerase] + ATP = phospho-[DNA-directed RNA polymerase] + ADP + H(+). In terms of biological role, component of the srb8-11 complex. The srb8-11 complex is a regulatory module of the Mediator complex which is itself involved in regulation of basal and activated RNA polymerase II-dependent transcription. The srb8-11 complex may be involved in the transcriptional repression of a subset of genes regulated by Mediator. It may inhibit the association of the Mediator complex with RNA polymerase II to form the holoenzyme complex. The srb8-11 complex phosphorylates the C-terminal domain (CTD) of the largest subunit of RNA polymerase II. The protein is Serine/threonine-protein kinase ssn3 (ssn3) of Aspergillus niger (strain ATCC MYA-4892 / CBS 513.88 / FGSC A1513).